Reading from the N-terminus, the 124-residue chain is Large ribosomal subunit protein uL14 (124 aa).

It belongs to the universal ribosomal protein uL14 family. As to quaternary structure, part of the 50S ribosomal subunit. Forms a cluster with proteins L3 and L19. In the 70S ribosome, L14 and L19 interact and together make contacts with the 16S rRNA in bridges B5 and B8.

Functionally, binds to 23S rRNA. Forms part of two intersubunit bridges in the 70S ribosome. The protein is Large ribosomal subunit protein uL14 of Clostridium novyi (strain NT).